We begin with the raw amino-acid sequence, 140 residues long: Iron sulfur cluster assembly protein 1 (140 aa).

The protein belongs to the NifU family. In terms of assembly, component of the core Fe-S cluster (ISC) assembly machinery. [2Fe-2S] cluster is required as a cofactor.

Its subcellular location is the mitosome matrix. Its pathway is cofactor biosynthesis; iron-sulfur cluster biosynthesis. Functionally, scaffold protein for the de novo synthesis of iron-sulfur (Fe-S) clusters within mitosomes, which is required for maturation of both [2Fe-2S] and [4Fe-4S] proteins. First, a [2Fe-2S] cluster is transiently assembled on the scaffold protein ISU1. In a second step, the cluster is released from ISU1, transferred to a glutaredoxin, followed by the formation of [2Fe-2S] proteins, the synthesis of [4Fe-4S] clusters and their target-specific insertion into the recipient apoproteins. Cluster assembly on ISU1 depends on the function of the cysteine desulfurase complex NFS1-ISD11, which serves as the sulfur donor for cluster synthesis, the iron-binding protein frataxin as the putative iron donor, and the electron transfer chain comprised of ferredoxin reductase and ferredoxin, which receive their electrons from NADH. In Encephalitozoon cuniculi (strain GB-M1) (Microsporidian parasite), this protein is Iron sulfur cluster assembly protein 1 (ISU1).